A 184-amino-acid polypeptide reads, in one-letter code: ATP synthase subunit b, chloroplastic (184 aa).

A helical membrane pass occupies residues 27 to 49 (LATNPINLSVVLGVLIFFGKGVL).

This sequence belongs to the ATPase B chain family. As to quaternary structure, F-type ATPases have 2 components, F(1) - the catalytic core - and F(0) - the membrane proton channel. F(1) has five subunits: alpha(3), beta(3), gamma(1), delta(1), epsilon(1). F(0) has four main subunits: a(1), b(1), b'(1) and c(10-14). The alpha and beta chains form an alternating ring which encloses part of the gamma chain. F(1) is attached to F(0) by a central stalk formed by the gamma and epsilon chains, while a peripheral stalk is formed by the delta, b and b' chains.

It localises to the plastid. Its subcellular location is the chloroplast thylakoid membrane. Its function is as follows. F(1)F(0) ATP synthase produces ATP from ADP in the presence of a proton or sodium gradient. F-type ATPases consist of two structural domains, F(1) containing the extramembraneous catalytic core and F(0) containing the membrane proton channel, linked together by a central stalk and a peripheral stalk. During catalysis, ATP synthesis in the catalytic domain of F(1) is coupled via a rotary mechanism of the central stalk subunits to proton translocation. Functionally, component of the F(0) channel, it forms part of the peripheral stalk, linking F(1) to F(0). This Ceratophyllum demersum (Rigid hornwort) protein is ATP synthase subunit b, chloroplastic.